A 431-amino-acid polypeptide reads, in one-letter code: Adenylosuccinate lyase (431 aa).

Residues 4–5 (RY), 67–69 (NHD), and 93–94 (TS) contribute to the N(6)-(1,2-dicarboxyethyl)-AMP site. His141 (proton donor/acceptor) is an active-site residue. Gln212 contacts N(6)-(1,2-dicarboxyethyl)-AMP. Residue Ser262 is the Proton donor/acceptor of the active site. Residues Ser263, 268-270 (KKN), and 307-311 (SVERY) each bind N(6)-(1,2-dicarboxyethyl)-AMP.

This sequence belongs to the lyase 1 family. Adenylosuccinate lyase subfamily. As to quaternary structure, homotetramer. Residues from neighboring subunits contribute catalytic and substrate-binding residues to each active site.

It catalyses the reaction N(6)-(1,2-dicarboxyethyl)-AMP = fumarate + AMP. The enzyme catalyses (2S)-2-[5-amino-1-(5-phospho-beta-D-ribosyl)imidazole-4-carboxamido]succinate = 5-amino-1-(5-phospho-beta-D-ribosyl)imidazole-4-carboxamide + fumarate. The protein operates within purine metabolism; AMP biosynthesis via de novo pathway; AMP from IMP: step 2/2. Its pathway is purine metabolism; IMP biosynthesis via de novo pathway; 5-amino-1-(5-phospho-D-ribosyl)imidazole-4-carboxamide from 5-amino-1-(5-phospho-D-ribosyl)imidazole-4-carboxylate: step 2/2. Functionally, catalyzes two reactions in de novo purine nucleotide biosynthesis. Catalyzes the breakdown of 5-aminoimidazole- (N-succinylocarboxamide) ribotide (SAICAR or 2-[5-amino-1-(5-phospho-beta-D-ribosyl)imidazole-4-carboxamido]succinate) to 5-aminoimidazole-4-carboxamide ribotide (AICAR or 5-amino-1-(5-phospho-beta-D-ribosyl)imidazole-4-carboxamide) and fumarate, and of adenylosuccinate (ADS or N(6)-(1,2-dicarboxyethyl)-AMP) to adenosine monophosphate (AMP) and fumarate. The protein is Adenylosuccinate lyase (purB) of Thermotoga maritima (strain ATCC 43589 / DSM 3109 / JCM 10099 / NBRC 100826 / MSB8).